Reading from the N-terminus, the 684-residue chain is Pseudohemocyanin-1 (684 aa).

An N-terminal signal peptide occupies residues Ser-1–Arg-23. The tract at residues Ala-7–Ala-32 is disordered. N-linked (GlcNAc...) asparagine glycans are attached at residues Asn-100, Asn-193, Asn-230, and Asn-626.

The protein belongs to the tyrosinase family. Hemocyanin subfamily. Hexamer. As to expression, strongly expressed in ovaries. Also expressed in heart. Not detected in hepatopancreas, gills, connective tissue or muscle.

In terms of biological role, does not function as a hemocyanin. This Homarus americanus (American lobster) protein is Pseudohemocyanin-1.